A 906-amino-acid chain; its full sequence is Aconitate hydratase A (906 aa).

[4Fe-4S] cluster-binding residues include Cys-443, Cys-509, and Cys-512.

Belongs to the aconitase/IPM isomerase family. As to quaternary structure, monomer. The cofactor is [4Fe-4S] cluster.

The catalysed reaction is citrate = D-threo-isocitrate. It catalyses the reaction (2S,3R)-3-hydroxybutane-1,2,3-tricarboxylate = 2-methyl-cis-aconitate + H2O. Its pathway is carbohydrate metabolism; tricarboxylic acid cycle; isocitrate from oxaloacetate: step 2/2. It functions in the pathway organic acid metabolism; propanoate degradation. Involved in the catabolism of short chain fatty acids (SCFA) via the tricarboxylic acid (TCA)(acetyl degradation route) and probably via the 2-methylcitrate cycle I (propionate degradation route). Catalyzes the reversible isomerization of citrate to isocitrate via cis-aconitate. Could catalyze the hydration of 2-methyl-cis-aconitate to yield (2R,3S)-2-methylisocitrate. The apo form of AcnA functions as a RNA-binding regulatory protein. The protein is Aconitate hydratase A of Bradyrhizobium diazoefficiens (strain JCM 10833 / BCRC 13528 / IAM 13628 / NBRC 14792 / USDA 110).